Here is a 364-residue protein sequence, read N- to C-terminus: Lysophosphatidic acid receptor 1 (364 aa).

The Extracellular portion of the chain corresponds to 1-50 (MAAISTSIPVISQPQFTAMNEPQCFYNESIAFFYNRSGKHLATEWNTVSK). Intrachain disulfides connect Cys24–Cys190 and Cys188–Cys195. N-linked (GlcNAc...) asparagine glycans are attached at residues Asn27 and Asn35. Lys39 is an a 1-acyl-sn-glycero-3-phosphate binding site. The helical transmembrane segment at 51-75 (LVMGLGITVCIFIMLANLLVMVAIY) threads the bilayer. The Cytoplasmic segment spans residues 76–83 (VNRRFHFP). The helical transmembrane segment at 84 to 107 (IYYLMANLAAADFFAGLAYFYLMF) threads the bilayer. The Extracellular segment spans residues 108-121 (NTGPNTRRLTVSTW). The helical transmembrane segment at 122-144 (LLRQGLIDTSLTASVANLLAIAI) threads the bilayer. Residue 124–129 (RQGLID) participates in a 1-acyl-sn-glycero-3-phosphate binding. Topologically, residues 145 to 163 (ERHITVFRMQLHTRMSNRR) are cytoplasmic. A helical membrane pass occupies residues 164-184 (VVVVIVVIWTMAIVMGAIPSV). Topologically, residues 185 to 204 (GWNCICDIENCSNMAPLYSD) are extracellular. Residues 205–225 (SYLVFWAIFNLVTFVVMVVLY) form a helical membrane-spanning segment. Residue Trp210 coordinates a 1-acyl-sn-glycero-3-phosphate. At 226 to 255 (AHIFGYVRQRTMRMSRHSSGPRRNRDTMMS) the chain is on the cytoplasmic side. The chain crosses the membrane as a helical span at residues 256–280 (LLKTVVIVLGAFIICWTPGLVLLLL). Residues 281-294 (DVCCPQCDVLAYEK) lie on the Extracellular side of the membrane. Residues Cys284 and Cys287 are joined by a disulfide bond. The helical transmembrane segment at 295–315 (FFLLLAEFNSAMNPIIYSYRD) threads the bilayer. Topologically, residues 316–364 (KEMSATFRQILCCQRSENPTGPTEGSDRSASSLNHTILAGVHSNDHSVV) are cytoplasmic. Ser341 carries the phosphoserine modification. A Phosphothreonine modification is found at Thr351.

The protein belongs to the G-protein coupled receptor 1 family. In terms of assembly, interacts with RALA and GRK2. Interacts with GNAQ and GNA13. Interacts with CD14; the interaction is enhanced by exposure to bacterial lipopolysaccharide (LPS). In terms of processing, N-glycosylated. Expressed in many adult organs, including brain, heart, colon, small intestine, placenta, prostate, ovary, pancreas, testes, spleen, skeletal muscle, and kidney. Little or no expression in liver, lung, thymus, or peripheral blood leukocytes. Detected in lung fibroblasts from bronchoalveolar fluid from patients with idiopathic pulmonary fibrosis. Detected in bone marrow-derived mesenchymal stem cells.

It localises to the cell surface. The protein resides in the cell membrane. It is found in the endosome. Functionally, receptor for lysophosphatidic acid (LPA). Plays a role in the reorganization of the actin cytoskeleton, cell migration, differentiation and proliferation, and thereby contributes to the responses to tissue damage and infectious agents. Activates downstream signaling cascades via the G(i)/G(o), G(12)/G(13), and G(q) families of heteromeric G proteins. Signaling inhibits adenylyl cyclase activity and decreases cellular cAMP levels. Signaling triggers an increase of cytoplasmic Ca(2+) levels. Activates RALA; this leads to the activation of phospholipase C (PLC) and the formation of inositol 1,4,5-trisphosphate. Signaling mediates activation of down-stream MAP kinases. Contributes to the regulation of cell shape. Promotes Rho-dependent reorganization of the actin cytoskeleton in neuronal cells and neurite retraction. Promotes the activation of Rho and the formation of actin stress fibers. Promotes formation of lamellipodia at the leading edge of migrating cells via activation of RAC1. Through its function as LPA receptor, plays a role in chemotaxis and cell migration, including responses to injury and wounding. Plays a role in triggering inflammation in response to bacterial lipopolysaccharide (LPS) via its interaction with CD14. Promotes cell proliferation in response to LPA. Inhibits the intracellular ciliogenesis pathway in response to LPA and through AKT1 activation. Required for normal skeleton development. May play a role in osteoblast differentiation. Required for normal brain development. Required for normal proliferation, survival and maturation of newly formed neurons in the adult dentate gyrus. Plays a role in pain perception and in the initiation of neuropathic pain. The sequence is that of Lysophosphatidic acid receptor 1 (LPAR1) from Homo sapiens (Human).